A 322-amino-acid chain; its full sequence is Putative pyruvyl transferase EpsO (322 aa).

This sequence belongs to the polysaccharide pyruvyl transferase family.

In terms of biological role, may be involved in the production of the exopolysaccharide (EPS) component of the extracellular matrix during biofilm formation. EPS is responsible for the adhesion of chains of cells into bundles. The sequence is that of Putative pyruvyl transferase EpsO (epsO) from Bacillus subtilis (strain 168).